Here is a 1079-residue protein sequence, read N- to C-terminus: Extracellular calcium-sensing receptor (1079 aa).

An N-terminal signal peptide occupies residues 1–19 (MAFSSCCWILLALTWCTSA). Topologically, residues 20–610 (YGPDQRAQKK…KEIEFLSWTE (591 aa)) are extracellular. The segment at 22–188 (PDQRAQKKGD…QFKSFLRTIP (167 aa)) is ligand-binding 1 (LB1). Cysteines 60 and 101 form a disulfide. 66–70 (RGFRW) contacts phosphate. Ca(2+) contacts are provided by I81, S84, L87, and L88. N90 carries N-linked (GlcNAc...) asparagine glycosylation. T100 is a binding site for Ca(2+). N130 carries an N-linked (GlcNAc...) asparagine glycan. Ca(2+) is bound at residue T145. S147, A168, and S170 together coordinate L-tryptophan. Positions 170, 188, 190, 231, and 234 each coordinate Ca(2+). The interval 189–324 (NDEHQATAMA…GGTIGFALKA (136 aa)) is ligand-binding 2 (LB2). Intrachain disulfides connect C236–C561, C358–C395, C437–C449, C542–C562, C546–C565, C568–C582, and C585–C598. Spermine-binding residues include D238 and S240. N-linked (GlcNAc...) asparagine glycans are attached at residues N261 and N287. Residue E297 participates in Ca(2+) binding. Residue E297 participates in L-tryptophan binding. Residues N386 and N400 are each glycosylated (N-linked (GlcNAc...) asparagine). 415–417 (RIS) contributes to the phosphate binding site. N446, N468, and N488 each carry an N-linked (GlcNAc...) asparagine glycan. Y489 serves as a coordination point for Ca(2+). An N-linked (GlcNAc...) asparagine glycan is attached at N541. A cysteine-rich (CR) region spans residues 542 to 612 (CSRDCLAGTR…IEFLSWTEPF (71 aa)). Position 557 (G557) interacts with Ca(2+). N594 carries an N-linked (GlcNAc...) asparagine glycan. The helical transmembrane segment at 611–636 (PFGIALTLFAVLGIFLTAFVLGVFIK) threads the bilayer. Topologically, residues 637–648 (FRNTPIVKATNR) are cytoplasmic. The intracellular loop 1 (ICL1) stretch occupies residues 637–648 (FRNTPIVKATNR). A helical transmembrane segment spans residues 649–668 (ELSYLLLFSLLCCFSSSLFF). The Extracellular portion of the chain corresponds to 669–674 (IGEPQD). The helical transmembrane segment at 675–698 (WTCRLRQPAFGISFVLCISCILVK) threads the bilayer. At 699–722 (TNRVLLVFEAKIPTSFHRKWWGLN) the chain is on the cytoplasmic side. The tract at residues 699-722 (TNRVLLVFEAKIPTSFHRKWWGLN) is intracellular loop 2 (ICL2). A helical membrane pass occupies residues 723–745 (LQFLLVFLCTFMQIVICAIWLYT). The Extracellular segment spans residues 746–769 (APPSSYRNHELEDEIIFITCHEGS). A helical transmembrane segment spans residues 770-789 (LMALGFLIGYTCLLAAICFF). Over 790 to 805 (FAFKSRKLPENFNEAK) the chain is Cytoplasmic. The intracellular loop 3 (ICL3) stretch occupies residues 790-805 (FAFKSRKLPENFNEAK). The chain crosses the membrane as a helical span at residues 806–828 (FITFSMLIFFIVWISFIPAYAST). Over 829 to 832 (YGKF) the chain is Extracellular. Residues 833-854 (VSAVEVIAILAASFGLLACIFF) traverse the membrane as a helical segment. The Cytoplasmic segment spans residues 855–1079 (NKVYIILFKP…STVTENMLHS (225 aa)). The tract at residues 855–1079 (NKVYIILFKP…STVTENMLHS (225 aa)) is C-terminus. Residues 880–900 (AFKVAARATLRRSNVSRQRSS) are interaction with RNF19A. A Phosphothreonine modification is found at T888. The tract at residues 890 to 898 (RRSNVSRQR) is arginine-rich retention motif. 3 positions are modified to phosphoserine: S892, S899, and S920. Over residues 892 to 918 (SNVSRQRSSSLGGSTGSTPSSSISSKS) the composition is skewed to low complexity. The tract at residues 892–963 (SNVSRQRSSS…QPQLQQQPRC (72 aa)) is disordered. Pro residues predominate over residues 945–954 (PQAPSTPQPQ). S1062 carries the phosphoserine modification.

It belongs to the G-protein coupled receptor 3 family. Homodimer; disulfide-linked. Interacts with VCP. Interacts with ARRB1. Phosphorylation at Thr-888 by PKC impairs coupling with G(q)/G(11) G-proteins, while it does not affect G(i)/G(o)-coupling. Phosphorylation at Ser-892 by PKC and Ser-899 by PKA promote plasma membrane localization. Post-translationally, ubiquitinated by RNF19A; which induces proteasomal degradation.

It localises to the cell membrane. Its activity is regulated as follows. In resting state, adopts an open conformation, anion-binding promoting the inactive configuration. Upon aromatic amino acid-binding, the groove in the extracellular venus flytrap module is closed, thereby inducing the formation of a novel homodimer interface between subunits. Calcium ions stabilize the active state by enhancing homodimer interactions between membrane-proximal domains to fully activate the receptor. Upon activation, the homodimer adopts an asymmetric configuration of the 7-transmembrane region that primes one protomer for G-protein coupling. G-protein binding expands the transmembrane dimer interface; the restriction imposed by the receptor dimer, in combination with intracellular loop 2 (ICL2), enables G-protein activation by facilitating conformational transition of G-protein alpha. Coupling to different classes of G-proteins results in distinct CASR-G-protein interfaces. In contrast to human protein, not activated by AMG 416, a D-amino acid-containing peptide agonist: this is probably due to the absence of a Cys residue at position 482, which forms a disulfide bond with the AMG 416 peptide agonist in human and that is replaced by a Tyr residue in pig. Functionally, G-protein-coupled receptor that senses changes in the extracellular concentration of calcium ions and plays a key role in maintaining calcium homeostasis. Senses fluctuations in the circulating calcium concentration: activated by elevated circulating calcium, leading to decreased parathyroid hormone (PTH) secretion in parathyroid glands. In kidneys, acts as a key regulator of renal tubular calcium resorption. Ligand binding causes a conformation change that triggers signaling via guanine nucleotide-binding proteins (G-proteins) and modulates the activity of downstream effectors. CASR is coupled with different G(q)/G(11), G(i)/G(o)- or G(s)-classes of G-proteins depending on the context. In the parathyroid and kidney, CASR signals through G(q)/G(11) and G(i)/G(o) G-proteins: G(q)/G(11) coupling activates phospholipase C-beta, releasing diacylglycerol (DAG) and inositol 1,4,5-trisphosphate (IP3) second messengers, while G(i)/G(o) coupling mediates inhibition of adenylate cyclase activity. The G-protein-coupled receptor activity is activated by a co-agonist mechanism: aromatic amino acids, such as Trp or Phe, act concertedly with divalent cations, such as calcium or magnesium, to achieve full receptor activation. Acts as an activator of the NLRP3 inflammasome via G(i)/G(o)-mediated signaling: down-regulation of cyclic AMP (cAMP) relieving NLRP3 inhibition by cAMP. Acts as a regulator of proton-sensing receptor GPR68 in a seesaw manner: CASR-mediated signaling inhibits GPR68 signaling in response to extracellular calcium, while GPR68 inhibits CASR in presence of extracellular protons. This is Extracellular calcium-sensing receptor (CASR) from Sus scrofa (Pig).